The primary structure comprises 157 residues: MIEINVYYKKWYSTIKKPKIFVKNVIKSSLINLNIYEYKPIISIVLANNILLQKLNYEYRNKNKPTNVLSFPYDKLNKKCNLGEIFLSLDTLIEESIDLNIPIEHHTCHMLIHGLLHILDYNHEEPLMQYIMESIEIKLLDKLGIRNPYVSRETIYP.

His113, His117, and His123 together coordinate Zn(2+).

This sequence belongs to the endoribonuclease YbeY family. Requires Zn(2+) as cofactor.

Its subcellular location is the cytoplasm. Its function is as follows. Single strand-specific metallo-endoribonuclease involved in late-stage 70S ribosome quality control and in maturation of the 3' terminus of the 16S rRNA. The protein is Endoribonuclease YbeY of Ehrlichia ruminantium (strain Gardel).